The chain runs to 339 residues: D-alanine--D-alanine ligase (339 aa).

In terms of domain architecture, ATP-grasp spans 115-327; the sequence is KHIFRSLGID…FNELVKIIIE (213 aa). An ATP-binding site is contributed by 142–211; sequence KIDYPYVLKP…EEYIPGIELH (70 aa). The Mg(2+) site is built by D279, E293, and N295.

It belongs to the D-alanine--D-alanine ligase family. It depends on Mg(2+) as a cofactor. Mn(2+) is required as a cofactor.

The protein resides in the cytoplasm. It carries out the reaction 2 D-alanine + ATP = D-alanyl-D-alanine + ADP + phosphate + H(+). It functions in the pathway cell wall biogenesis; peptidoglycan biosynthesis. Cell wall formation. In Wolbachia sp. subsp. Brugia malayi (strain TRS), this protein is D-alanine--D-alanine ligase.